Consider the following 1010-residue polypeptide: 2-oxoglutarate dehydrogenase-like, mitochondrial (1010 aa).

Residues 1-107 (MSQLRLLLFR…RASVSSCTKT (107 aa)) constitute a mitochondrion transit peptide. The tract at residues 28-47 (GGRRRSSGPPTTIPRSRGGV) is disordered. Ca(2+) is bound by residues His130, Asp143, and Asp145. Residues Arg299, Asp398, Asn431, Ile433, and Gln663 each contribute to the thiamine diphosphate site. Mg(2+) contacts are provided by Asp398, Asn431, and Ile433.

It belongs to the alpha-ketoglutarate dehydrogenase family. The OGDHC complex comprises multiple copies of three catalytic enzyme components, the 2-oxoglutarate dehydrogenase (OGDH/E1), the dihydrolipoamide dehydrogenase (DLST/E2) and the dihydrolipoamide dehydrogenase (DLD/E3). OGDHL/E1-like isoenzyme may replace OGDH in the OGDHC complex in the brain. The presence of either ODGH/E1 or ODGHL/E1-like isoenzyme in the complex may depend on its tissular distribution. Thiamine diphosphate serves as cofactor. It depends on Mg(2+) as a cofactor. As to expression, the OGDHL-containing OGDHC complex is present in the brain, but not in the heart.

The protein localises to the mitochondrion matrix. It catalyses the reaction N(6)-[(R)-lipoyl]-L-lysyl-[protein] + 2-oxoglutarate + H(+) = N(6)-[(R)-S(8)-succinyldihydrolipoyl]-L-lysyl-[protein] + CO2. In terms of biological role, 2-oxoglutarate dehydrogenase (E1-like) component of the 2-oxoglutarate dehydrogenase multienzyme complex (OGDHC) which mediates the decarboxylation of alpha-ketoglutarate in the tricarboxylic acid cycle. The OGDHC complex catalyzes the overall conversion of 2-oxoglutarate to succinyl-CoA and CO(2) while reducing NAD(+) to NADH. The OGDHC complex is mainly active in the mitochondrion. Involved in the inhibition of cell proliferation and in apoptosis. This chain is 2-oxoglutarate dehydrogenase-like, mitochondrial, found in Rattus norvegicus (Rat).